The following is a 212-amino-acid chain: NTVWPGTLTGDQKPQLSLTAFELASKASQSVDAPSPWSGRFWGRTRCSTDAAGKFSCETADCGSGQVACNGAGAVPPATLVEITIAANGGQDYYDVSLVDGFNLPMSVAPQGGTGECKPSSCPANVNMACPAQLQVKAADGSVISCKSACLAFGDSKYCCTPPNDTPETCPPTEYSEIFEKQCPQAYSYAYDDKNSTFTCSGGPDYVITFCP.

7 disulfides stabilise this stretch: Cys-47/Cys-57, Cys-62/Cys-69, Cys-117/Cys-200, Cys-122/Cys-183, Cys-130/Cys-146, Cys-150/Cys-159, and Cys-160/Cys-170.

Belongs to the thaumatin family.

It is found in the secreted. The polypeptide is Thaumatin-like protein 1b (Malus domestica (Apple)).